A 409-amino-acid polypeptide reads, in one-letter code: Potassium channel subfamily K member 3 (409 aa).

Over 1–8 (MKRQNVRT) the chain is Cytoplasmic. Residues 9-29 (LALIVCTFTYLLVGAAVFDAL) traverse the membrane as a helical segment. Asn-53 carries an N-linked (GlcNAc...) asparagine glycan. An intramembrane region (pore-forming) is located at residues 78–101 (WRFAGSFYFAITVITTIGYGHAAP). A helical membrane pass occupies residues 108-128 (VFCMFYALLGIPLTLVMFQSL). At 129-158 (GERINTFVRYLLHRAKRGLGMRHAEVSMAN) the chain is on the cytoplasmic side. A helical transmembrane segment spans residues 159 to 179 (MVLIGFVSCISTLCIGAAAFS). The segment at residues 184–207 (WTFFQAYYYCFITLTTIGFGDYVA) is an intramembrane region (pore-forming). Residues 223-243 (FSFVYILTGLTVIGAFLNLVV) traverse the membrane as a helical segment. Over 244 to 409 (LRFMTMNAED…RGLMKRRSSV (166 aa)) the chain is Cytoplasmic.

This sequence belongs to the two pore domain potassium channel (TC 1.A.1.8) family. As to quaternary structure, homodimer. Heterodimer with KCNK1. Heterodimer with KCNK9. In terms of tissue distribution, very strong expression in heart, also detected in kidney, brain, skin, testis, lung, skeletal muscle, small intestine and stomach. Not detected in liver, thymus or spleen. Expressed in adrenal glands mainly in zona glomerulosa and zona fasciculata of the cortex. Expressed at higher levels in brown and beige than in white adipocytes.

It is found in the cell membrane. The catalysed reaction is K(+)(in) = K(+)(out). It carries out the reaction Na(+)(in) = Na(+)(out). With respect to regulation, activated by halothane and isoflurane. Inhibited by external acidification, diacylglycerol and anandamide. Inactivated by barium. In terms of biological role, k(+) channel that conducts voltage-dependent outward rectifying currents upon membrane depolarization. Voltage sensing is coupled to K(+) electrochemical gradient in an 'ion flux gating' mode where outward but not inward ion flow opens the gate. Changes ion selectivity and becomes permeable to Na(+) ions in response to extracellular acidification. Protonation of the pH sensor His-98 stabilizes C-type inactivation conformation likely converting the channel from outward K(+)-conducting, to inward Na(+)-conducting to nonconductive state. Homo- and heterodimerizes to form functional channels with distinct regulatory and gating properties. Allows K(+) currents with fast-gating kinetics important for the repolarization and hyperpolarization phases of action potentials. In cerebellar granule cells, heteromeric KCNK3:KCNK9 channel may hyperpolarize the resting membrane potential to limit intrinsic neuronal excitability, but once the action potential threshold is reached, it may support high-frequency action potential firing and increased neuronal excitability. Dispensable for central chemosensory respiration i.e. breathing controlled by brainstem CO2/pH, it rather conducts pH-sensitive currents and controls the firing rate of serotonergic raphe neurons involved in potentiation of the respiratory chemoreflex. Additionally, imparts chemosensitivity to type 1 cells in carotid bodies which respond to a decrease in arterial oxygen pressure or an increase in carbon dioxide pressure or pH to initiate adaptive changes in pulmonary ventilation. In adrenal gland, contributes to the maintenance of a hyperpolarized resting membrane potential of aldosterone-producing cells at zona glomerulosa and limits aldosterone release as part of a regulatory mechanism that controls arterial blood pressure and electrolyte homeostasis. In brown adipocytes, mediates K(+) efflux that counteracts norepinephrine-induced membrane depolarization, limits Ca(2+) efflux and downstream cAMP and PKA signaling, ultimately attenuating lipid oxidation and adaptive thermogenesis. This Mus musculus (Mouse) protein is Potassium channel subfamily K member 3.